The following is a 36-amino-acid chain: Mu-agatoxin-Aa1a (36 aa).

4 disulfides stabilise this stretch: cysteine 2/cysteine 17, cysteine 9/cysteine 22, cysteine 16/cysteine 32, and cysteine 24/cysteine 30. Asparagine 36 is subject to Asparagine amide.

This sequence belongs to the neurotoxin 07 (Beta/delta-agtx) family. 04 (aga-5) subfamily. In terms of tissue distribution, expressed by the venom gland.

The protein localises to the secreted. Functionally, insecticidal neurotoxin that induces an irreversible spastic paralysis when injected into insects. Modifies presynaptic voltage-gated sodium channels (Nav), causing them to open at the normal resting potential of the nerve. This leads to spontaneous release of neurotransmitter and repetitive action potentials in motor neurons. In Agelenopsis aperta (North American funnel-web spider), this protein is Mu-agatoxin-Aa1a.